We begin with the raw amino-acid sequence, 246 residues long: DNA polymerase sliding clamp (246 aa).

The protein belongs to the PCNA family. In terms of assembly, homotrimer. The subunits circularize to form a toroid; DNA passes through its center. Replication factor C (RFC) is required to load the toroid on the DNA.

In terms of biological role, sliding clamp subunit that acts as a moving platform for DNA processing. Responsible for tethering the catalytic subunit of DNA polymerase and other proteins to DNA during high-speed replication. This Thermoplasma acidophilum (strain ATCC 25905 / DSM 1728 / JCM 9062 / NBRC 15155 / AMRC-C165) protein is DNA polymerase sliding clamp.